The sequence spans 227 residues: Phosphatidate cytidylyltransferase (227 aa).

Transmembrane regions (helical) follow at residues 31–51, 65–85, 93–113, 131–151, 165–185, and 206–226; these read FVIA…LVGM, IPYL…LTFL, WLIM…MIGG, WSGL…ASFI, IYLF…DLFI, and GVLD…FISI.

It belongs to the CDS family.

It localises to the cell membrane. The enzyme catalyses a 1,2-diacyl-sn-glycero-3-phosphate + CTP + H(+) = a CDP-1,2-diacyl-sn-glycerol + diphosphate. It participates in phospholipid metabolism; CDP-diacylglycerol biosynthesis; CDP-diacylglycerol from sn-glycerol 3-phosphate: step 3/3. This is Phosphatidate cytidylyltransferase (cdsA) from Rickettsia felis (strain ATCC VR-1525 / URRWXCal2) (Rickettsia azadi).